A 98-amino-acid polypeptide reads, in one-letter code: Carboxysome shell protein CsoS1C (98 aa).

The BMC domain maps to 8–93 (ALGMIETRGL…VHSEVENILP (86 aa)).

It belongs to the bacterial microcompartments protein family. CsoS1 subfamily. Homohexamer with a small central pore. Interacts with the N-terminus (residues 1-136) of RuBisCO (CbbL).

The protein resides in the carboxysome. One of shell proteins of the carboxysome, a polyhedral inclusion where RuBisCO (ribulose bisphosphate carboxylase, ccbL-ccbS) is sequestered. Assembles into hexamers which make sheets that form the facets of the polyhedral carboxysome. The shell probably limits the diffusion of CO(2) into and out of the carboxysome. There are estimated to be 2970 CsoS1A/CsoS1C proteins per carboxysome (the proteins differ by only 1 residue). In terms of biological role, unlike beta-carboxysomes, alpha-carboxysomes (Cb) can form without cargo protein. CsoS2 is essential for Cb formation and is also capable of targeting foreign proteins to the Cb. The Cb shell assembles with the aid of CsoS2; CsoS1A, CsoS1B and CsoS1C form the majority of the shell while CsoS4A and CsoS4B form vertices. CsoS1D forms pseudohexamers that probably control metabolite flux into and out of the shell. This chain is Carboxysome shell protein CsoS1C, found in Halothiobacillus neapolitanus (strain ATCC 23641 / c2) (Thiobacillus neapolitanus).